The following is a 152-amino-acid chain: Antiholin-like protein LrgA (152 aa).

Helical transmembrane passes span 23–43 (YSIF…KIIE), 45–65 (FMPI…IALC), 77–97 (VGTA…ISVI), and 108–128 (ILII…TGFS).

Belongs to the CidA/LrgA family. LrgA subfamily.

The protein localises to the cell membrane. Its function is as follows. Inhibits the expression or activity of extracellular murein hydrolases by interacting, possibly with LrgB, with the holin-like proteins CidA and/or CidB. The LrgAB and CidAB proteins may affect the proton motive force of the membrane. May be involved in programmed cell death (PCD), possibly triggering PCD in response to antibiotics and environmental stresses. The polypeptide is Antiholin-like protein LrgA (Staphylococcus epidermidis (strain ATCC 12228 / FDA PCI 1200)).